Here is a 126-residue protein sequence, read N- to C-terminus: Glycine cleavage system H protein (126 aa).

The Lipoyl-binding domain occupies 21 to 103 (TVTVGISNHA…YEGGWIARIK (83 aa)). The residue at position 62 (Lys-62) is an N6-lipoyllysine.

This sequence belongs to the GcvH family. In terms of assembly, the glycine cleavage system is composed of four proteins: P, T, L and H. (R)-lipoate serves as cofactor.

The glycine cleavage system catalyzes the degradation of glycine. The H protein shuttles the methylamine group of glycine from the P protein to the T protein. This is Glycine cleavage system H protein from Aliivibrio salmonicida (strain LFI1238) (Vibrio salmonicida (strain LFI1238)).